A 263-amino-acid chain; its full sequence is Thiamine thiazole synthase (263 aa).

NAD(+) contacts are provided by residues serine 43, 62-63 (ER), glycine 70, valine 134, and 160-162 (HID). The Fe cation site is built by aspartate 162 and histidine 177. The NAD(+) site is built by serine 180 and methionine 227. Arginine 237 is a glycine binding site.

It belongs to the THI4 family. As to quaternary structure, homooctamer; tetramer of dimers. Fe(2+) serves as cofactor.

The catalysed reaction is hydrogen sulfide + glycine + NAD(+) = ADP-5-ethyl-4-methylthiazole-2-carboxylate + nicotinamide + 3 H2O + H(+). The protein operates within cofactor biosynthesis; thiamine diphosphate biosynthesis. Involved in the biosynthesis of the thiazole moiety of thiamine. Catalyzes the conversion of NAD and glycine to adenosine diphosphate 5-(2-hydroxyethyl)-4-methylthiazole-2-carboxylate (ADT), an adenylated thiazole intermediate, using free sulfide as a source of sulfur. In Methanococcus aeolicus (strain ATCC BAA-1280 / DSM 17508 / OCM 812 / Nankai-3), this protein is Thiamine thiazole synthase.